A 176-amino-acid polypeptide reads, in one-letter code: MRLIDPDADLEFDPDSVYDGPSKSQKKREVEALQDLGNELVKLPDAQFKRIELPEELREAVAACRKITQNSALRRQRQYIGKLMRGIDPAPIQAQLDAFKGVSATENAKLHQAEKWRDRLIADNEALTIFLDSYPETDATRLRQLIRNARDEAARNKPPKAFREIFRVIREAMQAG.

Residues 1–16 (MRLIDPDADLEFDPDS) show a composition bias toward acidic residues. The tract at residues 1-29 (MRLIDPDADLEFDPDSVYDGPSKSQKKRE) is disordered.

This sequence belongs to the DarP family.

Its subcellular location is the cytoplasm. Member of a network of 50S ribosomal subunit biogenesis factors which assembles along the 30S-50S interface, preventing incorrect 23S rRNA structures from forming. Promotes peptidyl transferase center (PTC) maturation. The sequence is that of Dual-action ribosomal maturation protein DarP from Thiobacillus denitrificans (strain ATCC 25259 / T1).